The chain runs to 196 residues: Protein GrpE (196 aa).

The interval 1–41 (MSSKEQKTPEGQAPEEIITEQHDDVEAVEPEVSAEQVDPRD) is disordered.

Belongs to the GrpE family. Homodimer.

It is found in the cytoplasm. Its function is as follows. Participates actively in the response to hyperosmotic and heat shock by preventing the aggregation of stress-denatured proteins, in association with DnaK and GrpE. It is the nucleotide exchange factor for DnaK and may function as a thermosensor. Unfolded proteins bind initially to DnaJ; upon interaction with the DnaJ-bound protein, DnaK hydrolyzes its bound ATP, resulting in the formation of a stable complex. GrpE releases ADP from DnaK; ATP binding to DnaK triggers the release of the substrate protein, thus completing the reaction cycle. Several rounds of ATP-dependent interactions between DnaJ, DnaK and GrpE are required for fully efficient folding. This is Protein GrpE from Klebsiella pneumoniae subsp. pneumoniae (strain ATCC 700721 / MGH 78578).